The primary structure comprises 408 residues: LL-diaminopimelate aminotransferase (408 aa).

Substrate contacts are provided by Tyr15 and Gly42. Pyridoxal 5'-phosphate is bound by residues Tyr72, Ser108 to Lys109, Tyr132, Asn187, Tyr218, and Ser246 to Ser248. 3 residues coordinate substrate: Lys109, Tyr132, and Asn187. Lys249 is subject to N6-(pyridoxal phosphate)lysine. Pyridoxal 5'-phosphate is bound by residues Arg257 and Asn292. The substrate site is built by Asn292 and Arg388.

It belongs to the class-I pyridoxal-phosphate-dependent aminotransferase family. LL-diaminopimelate aminotransferase subfamily. Homodimer. Pyridoxal 5'-phosphate serves as cofactor.

The catalysed reaction is (2S,6S)-2,6-diaminopimelate + 2-oxoglutarate = (S)-2,3,4,5-tetrahydrodipicolinate + L-glutamate + H2O + H(+). It participates in amino-acid biosynthesis; L-lysine biosynthesis via DAP pathway; LL-2,6-diaminopimelate from (S)-tetrahydrodipicolinate (aminotransferase route): step 1/1. Functionally, involved in the synthesis of meso-diaminopimelate (m-DAP or DL-DAP), required for both lysine and peptidoglycan biosynthesis. Catalyzes the direct conversion of tetrahydrodipicolinate to LL-diaminopimelate. This Leptospira interrogans serogroup Icterohaemorrhagiae serovar Lai (strain 56601) protein is LL-diaminopimelate aminotransferase.